We begin with the raw amino-acid sequence, 503 residues long: Probable DNA double-strand break repair helicase HerA (503 aa).

ATP contacts are provided by residues Arg122, Gly131–Asn136, and Lys478–Ile479.

This sequence belongs to the HerA family.

The catalysed reaction is Couples ATP hydrolysis with the unwinding of duplex DNA at the replication fork by translocating in the 5'-3' direction. This creates two antiparallel DNA single strands (ssDNA). The leading ssDNA polymer is the template for DNA polymerase III holoenzyme which synthesizes a continuous strand.. The enzyme catalyses ATP + H2O = ADP + phosphate + H(+). It catalyses the reaction Couples ATP hydrolysis with the unwinding of duplex DNA by translocating in the 3'-5' direction.. Functionally, involved in DNA double-strand break (DSB) repair. Probably acts with NurA to stimulate resection of the 5' strand and produce the long 3' single-strand that is required for RadA loading. Has DNA-dependent ATPase activity and DNA helicase activity. The polypeptide is Probable DNA double-strand break repair helicase HerA (Methanocaldococcus jannaschii (strain ATCC 43067 / DSM 2661 / JAL-1 / JCM 10045 / NBRC 100440) (Methanococcus jannaschii)).